A 292-amino-acid chain; its full sequence is DSC E3 ubiquitin ligase complex subunit 3 (292 aa).

Residues 1–243 (MSAEPLLPTH…PIANIKHNKD (243 aa)) lie on the Extracellular side of the membrane. Asparagine 11, asparagine 41, asparagine 77, asparagine 99, and asparagine 145 each carry an N-linked (GlcNAc...) asparagine glycan. Residues 244 to 264 (LLLGICVGFFFGVFGILLMKF) traverse the membrane as a helical segment. Topologically, residues 265 to 273 (DGLFNRRQK) are cytoplasmic. The helical transmembrane segment at 274–291 (MAIFAGVIVNVMFCLVRG) threads the bilayer. Phenylalanine 292 is a topological domain (extracellular).

This sequence belongs to the dsc3 family. As to quaternary structure, component of the DSC E3 ligase complexes composed of at least TUL1, DSC2, DSC3, UBX3, CDC48 as well as VLD1 for the vacuole-localized complex or GLD1 for the Golgi/endosome-localized complex.

The protein resides in the endoplasmic reticulum membrane. In terms of biological role, component of the DSC E3 ubiquitin ligase complexes that tag proteins present in Golgi, endosome and vacuole membranes and function in protein homeostasis under non-stress conditions and support a role in protein quality control. Involved in endocytic protein trafficking. The chain is DSC E3 ubiquitin ligase complex subunit 3 from Saccharomyces cerevisiae (strain ATCC 204508 / S288c) (Baker's yeast).